The sequence spans 252 residues: Large ribosomal subunit protein uL4 (252 aa).

This sequence belongs to the universal ribosomal protein uL4 family. As to quaternary structure, part of the 50S ribosomal subunit.

Its function is as follows. One of the primary rRNA binding proteins, this protein initially binds near the 5'-end of the 23S rRNA. It is important during the early stages of 50S assembly. It makes multiple contacts with different domains of the 23S rRNA in the assembled 50S subunit and ribosome. Forms part of the polypeptide exit tunnel. The protein is Large ribosomal subunit protein uL4 of Archaeoglobus fulgidus (strain ATCC 49558 / DSM 4304 / JCM 9628 / NBRC 100126 / VC-16).